The following is a 61-amino-acid chain: Small ribosomal subunit protein uS14 (61 aa).

Residues Cys24, Cys27, Cys40, and Cys43 each coordinate Zn(2+).

It belongs to the universal ribosomal protein uS14 family. Zinc-binding uS14 subfamily. In terms of assembly, part of the 30S ribosomal subunit. Contacts proteins S3 and S10. The cofactor is Zn(2+).

Binds 16S rRNA, required for the assembly of 30S particles and may also be responsible for determining the conformation of the 16S rRNA at the A site. The chain is Small ribosomal subunit protein uS14 from Borrelia garinii subsp. bavariensis (strain ATCC BAA-2496 / DSM 23469 / PBi) (Borreliella bavariensis).